Consider the following 466-residue polypeptide: Ribulose bisphosphate carboxylase large chain (466 aa).

Lys5 carries the post-translational modification N6,N6,N6-trimethyllysine. Positions 114 and 164 each coordinate substrate. The active-site Proton acceptor is the Lys166. Residue Lys168 coordinates substrate. Residues Lys192, Asp194, and Glu195 each contribute to the Mg(2+) site. Lys192 bears the N6-carboxylysine mark. The active-site Proton acceptor is the His285. Substrate contacts are provided by Arg286, His318, and Ser370.

It belongs to the RuBisCO large chain family. Type I subfamily. Heterohexadecamer of 8 large chains and 8 small chains. Mg(2+) is required as a cofactor.

It localises to the plastid. Its subcellular location is the chloroplast. It carries out the reaction 2 (2R)-3-phosphoglycerate + 2 H(+) = D-ribulose 1,5-bisphosphate + CO2 + H2O. It catalyses the reaction D-ribulose 1,5-bisphosphate + O2 = 2-phosphoglycolate + (2R)-3-phosphoglycerate + 2 H(+). RuBisCO catalyzes two reactions: the carboxylation of D-ribulose 1,5-bisphosphate, the primary event in carbon dioxide fixation, as well as the oxidative fragmentation of the pentose substrate in the photorespiration process. Both reactions occur simultaneously and in competition at the same active site. This chain is Ribulose bisphosphate carboxylase large chain, found in Lobelia sp.